The primary structure comprises 601 residues: Elongation factor 4 (601 aa).

Residues 7 to 189 enclose the tr-type G domain; the sequence is RNIRNFSIIA…AIVHRIPPPK (183 aa). Residues 19-24 and 136-139 each bind GTP; these read DHGKST and NKID.

It belongs to the TRAFAC class translation factor GTPase superfamily. Classic translation factor GTPase family. LepA subfamily.

The protein localises to the cell inner membrane. The enzyme catalyses GTP + H2O = GDP + phosphate + H(+). Required for accurate and efficient protein synthesis under certain stress conditions. May act as a fidelity factor of the translation reaction, by catalyzing a one-codon backward translocation of tRNAs on improperly translocated ribosomes. Back-translocation proceeds from a post-translocation (POST) complex to a pre-translocation (PRE) complex, thus giving elongation factor G a second chance to translocate the tRNAs correctly. Binds to ribosomes in a GTP-dependent manner. The chain is Elongation factor 4 from Xanthomonas axonopodis pv. citri (strain 306).